An 89-amino-acid polypeptide reads, in one-letter code: Small ribosomal subunit protein uS15 (89 aa).

This sequence belongs to the universal ribosomal protein uS15 family. Part of the 30S ribosomal subunit. Forms a bridge to the 50S subunit in the 70S ribosome, contacting the 23S rRNA.

Functionally, one of the primary rRNA binding proteins, it binds directly to 16S rRNA where it helps nucleate assembly of the platform of the 30S subunit by binding and bridging several RNA helices of the 16S rRNA. Forms an intersubunit bridge (bridge B4) with the 23S rRNA of the 50S subunit in the ribosome. The sequence is that of Small ribosomal subunit protein uS15 from Shewanella putrefaciens (strain CN-32 / ATCC BAA-453).